The chain runs to 395 residues: ATP synthase subunit a (395 aa).

Helical transmembrane passes span 153 to 173 (FTNP…LVYF), 246 to 266 (HFLI…IVGF), 273 to 293 (FLSF…LVLL), 313 to 333 (MMAG…MLCM), and 339 to 359 (FIGD…ELGV).

Belongs to the ATPase A chain family. In terms of assembly, F-type ATPases have 2 components, CF(1) - the catalytic core - and CF(0) - the membrane proton channel. CF(1) has five subunits: alpha(3), beta(3), gamma(1), delta(1), epsilon(1). CF(0) has three main subunits: a, b and c.

The protein localises to the mitochondrion inner membrane. In terms of biological role, mitochondrial membrane ATP synthase (F(1)F(0) ATP synthase or Complex V) produces ATP from ADP in the presence of a proton gradient across the membrane which is generated by electron transport complexes of the respiratory chain. F-type ATPases consist of two structural domains, F(1) - containing the extramembraneous catalytic core and F(0) - containing the membrane proton channel, linked together by a central stalk and a peripheral stalk. During catalysis, ATP synthesis in the catalytic domain of F(1) is coupled via a rotary mechanism of the central stalk subunits to proton translocation. Key component of the proton channel; it may play a direct role in the translocation of protons across the membrane. This is ATP synthase subunit a (ATP6) from Nicotiana tabacum (Common tobacco).